A 213-amino-acid polypeptide reads, in one-letter code: Motile sperm domain-containing protein 1 (213 aa).

The region spanning 16 to 143 (PVFVFPTELI…KEHLTESLFF (128 aa)) is the MSP domain. Helical transmembrane passes span 159-179 (SLLTVFLAVVCITALMLPTLG) and 191-211 (LSVNQKLVAAYILGLITMAIF). The Nuclear export signal signature appears at 205 to 208 (LITM).

It is found in the endoplasmic reticulum membrane. Its subcellular location is the golgi apparatus membrane. Plays a role in differentiation and/or proliferation of mesenchymal stem cells. Proposed to be involved in epithelial-to-mesenchymal transition (EMT). However, another study suggests that it is not required for EMT or stem cell self-renewal and acts during later stages of differentiation. The polypeptide is Motile sperm domain-containing protein 1 (MOSPD1) (Bos taurus (Bovine)).